The sequence spans 421 residues: ATP-dependent RNA helicase RhlB (421 aa).

The Q motif motif lies at 9-37; that stretch reads QKFSDFALHPKVVEALEKKGFHNCTPIQA. The Helicase ATP-binding domain maps to 40 to 219; the sequence is LPLTLAGRDV…FEQMNNAEYI (180 aa). 53–60 provides a ligand contact to ATP; it reads AQTGTGKT. Positions 165–168 match the DEAD box motif; that stretch reads DEAD. The Helicase C-terminal domain maps to 245 to 390; the sequence is RLLQTLIEEE…VSKYNPDALM (146 aa). Residues 392–421 form a disordered region; it reads DLPKPLRLTRPRTGNGPRRTGAPRNRRRSG. A compositionally biased stretch (low complexity) spans 402 to 414; sequence PRTGNGPRRTGAP.

Belongs to the DEAD box helicase family. RhlB subfamily. Component of the RNA degradosome, which is a multiprotein complex involved in RNA processing and mRNA degradation.

Its subcellular location is the cytoplasm. The catalysed reaction is ATP + H2O = ADP + phosphate + H(+). DEAD-box RNA helicase involved in RNA degradation. Has RNA-dependent ATPase activity and unwinds double-stranded RNA. This Escherichia coli O157:H7 protein is ATP-dependent RNA helicase RhlB.